A 95-amino-acid chain; its full sequence is Co-chaperonin GroES (95 aa).

Belongs to the GroES chaperonin family. In terms of assembly, heptamer of 7 subunits arranged in a ring. Interacts with the chaperonin GroEL.

It localises to the cytoplasm. Functionally, together with the chaperonin GroEL, plays an essential role in assisting protein folding. The GroEL-GroES system forms a nano-cage that allows encapsulation of the non-native substrate proteins and provides a physical environment optimized to promote and accelerate protein folding. GroES binds to the apical surface of the GroEL ring, thereby capping the opening of the GroEL channel. The protein is Co-chaperonin GroES of Syntrophotalea carbinolica (strain DSM 2380 / NBRC 103641 / GraBd1) (Pelobacter carbinolicus).